Consider the following 147-residue polypeptide: Hemoglobin subunit beta-3 (147 aa).

The region spanning 2-147 is the Globin domain; that stretch reads EWTDAERTAI…VTSALSRQYH (146 aa). 2 residues coordinate heme b: H63 and H92.

It belongs to the globin family. As to quaternary structure, heterotetramer of two alpha chains and two beta chains. In terms of tissue distribution, red blood cells.

Functionally, involved in oxygen transport from gills to the various peripheral tissues. The polypeptide is Hemoglobin subunit beta-3 (hbb3) (Muraena helena (Mediterranean moray)).